The chain runs to 184 residues: Ras-related protein Rap-1b-like protein (184 aa).

10-18 (GSRGVGKSA) is a binding site for GTP. The short motif at 32-40 (YDPTIEDSY) is the Effector region element. GTP is bound by residues 57–61 (DTAGT), 116–119 (NKCD), and 147–149 (SAK). Cys181 is lipidated: S-geranylgeranyl cysteine. Positions 182 to 184 (QLL) are cleaved as a propeptide — removed in mature form.

Belongs to the small GTPase superfamily. Ras family.

Its subcellular location is the cell membrane. It localises to the cytoplasm. It is found in the cytosol. The enzyme catalyses GTP + H2O = GDP + phosphate + H(+). Probable GTP-binding protein with intrinsic GTPase activity. The polypeptide is Ras-related protein Rap-1b-like protein (Homo sapiens (Human)).